The sequence spans 63 residues: Large ribosomal subunit protein bL28 (63 aa).

The protein belongs to the bacterial ribosomal protein bL28 family.

The sequence is that of Large ribosomal subunit protein bL28 from Coprothermobacter proteolyticus (strain ATCC 35245 / DSM 5265 / OCM 4 / BT).